The primary structure comprises 129 residues: Glycine cleavage system H protein (129 aa).

The Lipoyl-binding domain occupies 24 to 106 (LLKIGVSEFA…IGDGWLVILK (83 aa)). Residue Lys65 is modified to N6-lipoyllysine.

This sequence belongs to the GcvH family. In terms of assembly, the glycine cleavage system is composed of four proteins: P, T, L and H. (R)-lipoate serves as cofactor.

The glycine cleavage system catalyzes the degradation of glycine. The H protein shuttles the methylamine group of glycine from the P protein to the T protein. This chain is Glycine cleavage system H protein, found in Prochlorococcus marinus (strain MIT 9301).